We begin with the raw amino-acid sequence, 141 residues long: Mite group 2 allergen Lep d 2 (141 aa).

A signal peptide spans 1–16 (MMKFIALFALVAVASA). 3 disulfides stabilise this stretch: Cys24–Cys133, Cys37–Cys42, and Cys88–Cys93. A run of 3 repeats spans residues 64 to 65 (KV), 68 to 69 (KV), and 72 to 73 (KV). Residues 64–73 (KVTIKVLAKV) form a 3 X 2 AA repeats of K-V region.

The protein belongs to the NPC2 family. As to quaternary structure, monomer.

It localises to the secreted. The sequence is that of Mite group 2 allergen Lep d 2 from Lepidoglyphus destructor (Storage mite).